We begin with the raw amino-acid sequence, 200 residues long: GTP cyclohydrolase 1 (200 aa).

Residues Cys-87, His-90, and Cys-158 each contribute to the Zn(2+) site.

The protein belongs to the GTP cyclohydrolase I family. As to quaternary structure, toroid-shaped homodecamer, composed of two pentamers of five dimers.

The catalysed reaction is GTP + H2O = 7,8-dihydroneopterin 3'-triphosphate + formate + H(+). The protein operates within cofactor biosynthesis; 7,8-dihydroneopterin triphosphate biosynthesis; 7,8-dihydroneopterin triphosphate from GTP: step 1/1. The protein is GTP cyclohydrolase 1 of Xanthomonas campestris pv. campestris (strain ATCC 33913 / DSM 3586 / NCPPB 528 / LMG 568 / P 25).